The primary structure comprises 335 residues: Protein-glutamate methylesterase/protein-glutamine glutaminase 3 (335 aa).

Positions 2-119 constitute a Response regulatory domain; that stretch reads RIGIVNDMPL…GNPQTAAAPL (118 aa). D53 is subject to 4-aspartylphosphate. A CheB-type methylesterase domain is found at 144-335; it reads PKAGGARQRL…IAPRLAEVFD (192 aa). Active-site residues include S159, H186, and D279.

Belongs to the CheB family. Post-translationally, phosphorylated by CheA. Phosphorylation of the N-terminal regulatory domain activates the methylesterase activity.

The protein resides in the cytoplasm. The enzyme catalyses [protein]-L-glutamate 5-O-methyl ester + H2O = L-glutamyl-[protein] + methanol + H(+). The catalysed reaction is L-glutaminyl-[protein] + H2O = L-glutamyl-[protein] + NH4(+). In terms of biological role, involved in chemotaxis. Part of a chemotaxis signal transduction system that modulates chemotaxis in response to various stimuli. Catalyzes the demethylation of specific methylglutamate residues introduced into the chemoreceptors (methyl-accepting chemotaxis proteins or MCP) by CheR. Also mediates the irreversible deamidation of specific glutamine residues to glutamic acid. The protein is Protein-glutamate methylesterase/protein-glutamine glutaminase 3 of Pseudomonas aeruginosa (strain ATCC 15692 / DSM 22644 / CIP 104116 / JCM 14847 / LMG 12228 / 1C / PRS 101 / PAO1).